A 174-amino-acid polypeptide reads, in one-letter code: Bifunctional protein PyrR 2 (174 aa).

Substrate is bound by residues T39–R40, D100–T108, and R133. The PRPP-binding signature appears at V96 to T108.

This sequence belongs to the purine/pyrimidine phosphoribosyltransferase family. PyrR subfamily. Homodimer and homohexamer; in equilibrium.

The catalysed reaction is UMP + diphosphate = 5-phospho-alpha-D-ribose 1-diphosphate + uracil. In terms of biological role, regulates transcriptional attenuation of the pyrimidine nucleotide (pyr) operon by binding in a uridine-dependent manner to specific sites on pyr mRNA. This disrupts an antiterminator hairpin in the RNA and favors formation of a downstream transcription terminator, leading to a reduced expression of downstream genes. Its function is as follows. Also displays a weak uracil phosphoribosyltransferase activity which is not physiologically significant. The polypeptide is Bifunctional protein PyrR 2 (pyrR2) (Lactiplantibacillus plantarum (strain ATCC BAA-793 / NCIMB 8826 / WCFS1) (Lactobacillus plantarum)).